The sequence spans 318 residues: DNA-directed RNA polymerase subunit alpha (318 aa).

The tract at residues 1–227 is alpha N-terminal domain (alpha-NTD); it reads MTQFEIECLD…NLFSPLKTID (227 aa). The segment at 241–318 is alpha C-terminal domain (alpha-CTD); that stretch reads HINQILIEEL…KEKTTKIYNK (78 aa).

This sequence belongs to the RNA polymerase alpha chain family. In plastids the minimal PEP RNA polymerase catalytic core is composed of four subunits: alpha, beta, beta', and beta''. When a (nuclear-encoded) sigma factor is associated with the core the holoenzyme is formed, which can initiate transcription.

It is found in the plastid. It localises to the chloroplast. The catalysed reaction is RNA(n) + a ribonucleoside 5'-triphosphate = RNA(n+1) + diphosphate. In terms of biological role, DNA-dependent RNA polymerase catalyzes the transcription of DNA into RNA using the four ribonucleoside triphosphates as substrates. This is DNA-directed RNA polymerase subunit alpha from Guillardia theta (Cryptophyte).